The sequence spans 206 residues: Glycerol-3-phosphate acyltransferase (206 aa).

Transmembrane regions (helical) follow at residues 4–24 (TAFA…AVIV), 53–73 (LAAA…VALA), 86–106 (GIAL…FFGF), 116–136 (VGIL…TWLF), 137–157 (MAFV…LAPV), and 160–180 (FFIL…AIVV).

Belongs to the PlsY family. As to quaternary structure, probably interacts with PlsX.

It localises to the cell inner membrane. It carries out the reaction an acyl phosphate + sn-glycerol 3-phosphate = a 1-acyl-sn-glycero-3-phosphate + phosphate. It participates in lipid metabolism; phospholipid metabolism. Functionally, catalyzes the transfer of an acyl group from acyl-phosphate (acyl-PO(4)) to glycerol-3-phosphate (G3P) to form lysophosphatidic acid (LPA). This enzyme utilizes acyl-phosphate as fatty acyl donor, but not acyl-CoA or acyl-ACP. The sequence is that of Glycerol-3-phosphate acyltransferase from Chromobacterium violaceum (strain ATCC 12472 / DSM 30191 / JCM 1249 / CCUG 213 / NBRC 12614 / NCIMB 9131 / NCTC 9757 / MK).